A 315-amino-acid chain; its full sequence is DNA-directed RNA polymerase subunit alpha (315 aa).

Positions 1–228 (MAQFQIECVE…DLFNPLKDIS (228 aa)) are alpha N-terminal domain (alpha-NTD). Residues 238-315 (IPDDPTAQIP…LPQERSSKHS (78 aa)) form an alpha C-terminal domain (alpha-CTD) region.

Belongs to the RNA polymerase alpha chain family. In cyanobacteria the RNAP catalytic core is composed of 2 alpha, 1 beta, 1 beta', 1 gamma and 1 omega subunit. When a sigma factor is associated with the core the holoenzyme is formed, which can initiate transcription.

The enzyme catalyses RNA(n) + a ribonucleoside 5'-triphosphate = RNA(n+1) + diphosphate. Functionally, DNA-dependent RNA polymerase catalyzes the transcription of DNA into RNA using the four ribonucleoside triphosphates as substrates. In Trichormus variabilis (strain ATCC 29413 / PCC 7937) (Anabaena variabilis), this protein is DNA-directed RNA polymerase subunit alpha.